We begin with the raw amino-acid sequence, 432 residues long: Alpha-2 adrenergic receptor (432 aa).

Residues 1–32 lie on the Extracellular side of the membrane; that stretch reads MDPLNATGMDAFTAIHLNASWSADSGYSLAAI. Asn-5 and Asn-18 each carry an N-linked (GlcNAc...) asparagine glycan. Residues 33–57 traverse the membrane as a helical segment; that stretch reads ASIAALVSFLILFTVVGNILVVIAV. The Cytoplasmic segment spans residues 58–69; that stretch reads LTSRALKAPQNL. A helical transmembrane segment spans residues 70–95; sequence FLVSLATADILVATLVMPFSLANELM. Over 96 to 105 the chain is Extracellular; sequence GYWYFGKVWC. An intrachain disulfide couples Cys-105 to Cys-183. The helical transmembrane segment at 106 to 128 threads the bilayer; that stretch reads GIYLALDVLFCTSSIVHLCAISL. The Cytoplasmic segment spans residues 129–149; sequence DRYWSVTQAVEYNLKRTPKRV. The helical transmembrane segment at 150–172 threads the bilayer; it reads KCIIVIVWLISAFISSPPLLSID. At 173–188 the chain is on the extracellular side; it reads SNNYISSQPQCMLNDD. Residues 189-212 traverse the membrane as a helical segment; sequence TWYILSSSMASFFAPCLIMILVYI. Residues 213 to 356 lie on the Cytoplasmic side of the membrane; sequence RIYQVAKTRT…QAREKRFTFV (144 aa). Residues 222-319 are disordered; sequence TRSMSGKEPR…SISKQSARIS (98 aa). Composition is skewed to polar residues over residues 235–246 and 265–275; these read VTQTENGLNKAN and SQRTVTIGQQT. A compositionally biased stretch (basic and acidic residues) spans 288–300; that stretch reads GKGHKPQRQDSQR. Polar residues predominate over residues 309-319; that stretch reads SSISKQSARIS. The chain crosses the membrane as a helical span at residues 357–380; sequence LAVVMGVFVVCWFPFFFSYSLHAV. Residues 381–393 are Extracellular-facing; the sequence is CRDYCKIPDTLFK. The chain crosses the membrane as a helical span at residues 394–413; sequence FFWIGYCNSSLNPAIYTIFN. The Cytoplasmic segment spans residues 414–432; the sequence is RDFRRAFQKILCKSWKKSF.

This sequence belongs to the G-protein coupled receptor 1 family.

The protein localises to the cell membrane. In terms of biological role, alpha-2 adrenergic receptors mediate the catecholamine-induced inhibition of adenylate cyclase through the action of G proteins. This chain is Alpha-2 adrenergic receptor, found in Labrus ossifagus (Cuckoo wrasse).